The following is a 221-amino-acid chain: Large ribosomal subunit protein uL4 (221 aa).

A disordered region spans residues A45–Q100.

This sequence belongs to the universal ribosomal protein uL4 family. Part of the 50S ribosomal subunit.

In terms of biological role, one of the primary rRNA binding proteins, this protein initially binds near the 5'-end of the 23S rRNA. It is important during the early stages of 50S assembly. It makes multiple contacts with different domains of the 23S rRNA in the assembled 50S subunit and ribosome. Forms part of the polypeptide exit tunnel. The chain is Large ribosomal subunit protein uL4 from Leifsonia xyli subsp. xyli (strain CTCB07).